The sequence spans 1165 residues: DNA-directed RNA polymerase subunit beta (1165 aa).

The protein belongs to the RNA polymerase beta chain family. In terms of assembly, the RNAP catalytic core consists of 2 alpha, 1 beta, 1 beta' and 1 omega subunit. When a sigma factor is associated with the core the holoenzyme is formed, which can initiate transcription.

It catalyses the reaction RNA(n) + a ribonucleoside 5'-triphosphate = RNA(n+1) + diphosphate. In terms of biological role, DNA-dependent RNA polymerase catalyzes the transcription of DNA into RNA using the four ribonucleoside triphosphates as substrates. This Corynebacterium glutamicum (strain R) protein is DNA-directed RNA polymerase subunit beta.